Consider the following 236-residue polypeptide: MDSLKKIVAYKAVDEYVQSNMTIGLGTGSTVFYVLERIDNLLKSGKLKDVVCIPTSIDTELKARKLGIPLTTLEKHSNIDITIDGTDEIDLNLNLIKGRGGALVREKLVASSSSLFIIIGDESKLCTNGLGMTGAVPIEILTFGYEKIIENLLKIYTLKGCTYKIRKRNGEIFITDNKNYIVDFFFTEPIQDLLETCTRIKMTTGVVDHGIFVNMTNVALISKHDGTVLTLNKKYE.

Substrate contacts are provided by residues 27–30 (TGST), 84–87 (DGTD), and 97–100 (KGRG). Catalysis depends on glutamate 106, which acts as the Proton acceptor. Position 124 (lysine 124) interacts with substrate.

The protein belongs to the ribose 5-phosphate isomerase family. Homodimer.

The catalysed reaction is aldehydo-D-ribose 5-phosphate = D-ribulose 5-phosphate. It functions in the pathway carbohydrate degradation; pentose phosphate pathway; D-ribose 5-phosphate from D-ribulose 5-phosphate (non-oxidative stage): step 1/1. Its function is as follows. Involved in the first step of the non-oxidative branch of the pentose phosphate pathway. It catalyzes the reversible conversion of ribose-5-phosphate to ribulose 5-phosphate. This Plasmodium falciparum (isolate 3D7) protein is Ribose-5-phosphate isomerase.